The sequence spans 145 residues: Deoxyuridine 5'-triphosphate nucleotidohydrolase (145 aa).

Residues 65-67, Asn78, 82-84, and Met92 contribute to the substrate site; these read RSG and TID.

Belongs to the dUTPase family. The cofactor is Mg(2+).

The enzyme catalyses dUTP + H2O = dUMP + diphosphate + H(+). It functions in the pathway pyrimidine metabolism; dUMP biosynthesis; dUMP from dCTP (dUTP route): step 2/2. In terms of biological role, this enzyme is involved in nucleotide metabolism: it produces dUMP, the immediate precursor of thymidine nucleotides and it decreases the intracellular concentration of dUTP so that uracil cannot be incorporated into DNA. In Chlorobium phaeobacteroides (strain BS1), this protein is Deoxyuridine 5'-triphosphate nucleotidohydrolase.